Reading from the N-terminus, the 439-residue chain is MGVANDSSPEYQWMSPHRLSDTVILGDCLYFNNIMSQLDLHQNWAPSVRLLNYFKNFNKETLLKIEENDYINSSFFQQKDKRFYPINDDFYHISTGGYGIVFKIDNYVVKFVFEATKLYSPMETTAEFTVPKFLYNNLKGDEKKLIVCAWAMGLNYKLTFLHTLYKRVLHMLLLLIQTMDGQELSLRYSSKVFLKAFNERKDSIKFVKLLSHFYPAVINSNINVINYFNRMFHFFEHEKRTNYEYERGNIIIFPLALYSADKVDTELAIKLGFKSLVQYIKFIFLQMALLYIKIYELPCCDNFLHADLKPDNILLFDSNEPIIIHLKDKKFVFNERIKSALNDFDFSQVAGIINKKIKNNFKVEHNWYYDFHFFVHTLLKTYPEIEKDIEFSTALEEFIMCTKTDCDKYRLKVSILHPISFLEKFIMRDIFSDWINGGN.

The 353-residue stretch at 87–439 (NDDFYHISTG…IFSDWINGGN (353 aa)) folds into the Protein kinase domain. Residues 93 to 101 (ISTGGYGIV) and K117 contribute to the ATP site. D307 functions as the Proton acceptor in the catalytic mechanism.

This sequence belongs to the protein kinase superfamily. Ser/Thr protein kinase family. In terms of processing, phosphorylated in vivo. Autophosphorylated in vitro.

It is found in the host endoplasmic reticulum. Its subcellular location is the host endoplasmic reticulum-Golgi intermediate compartment. It catalyses the reaction L-seryl-[protein] + ATP = O-phospho-L-seryl-[protein] + ADP + H(+). The enzyme catalyses L-threonyl-[protein] + ATP = O-phospho-L-threonyl-[protein] + ADP + H(+). Essential serine-protein kinase involved in the early stage of virion morphogenesis. This Bos taurus (Bovine) protein is Serine/threonine-protein kinase 2 (OPG054).